Reading from the N-terminus, the 425-residue chain is WD repeat-containing protein jip5 (425 aa).

5 WD repeats span residues P9 to D48, R72 to K111, E117 to S158, I221 to E262, and D318 to Y355. Residues L40–H63 are disordered. A disordered region spans residues M358–Y425. The span at D367 to D385 shows a compositional bias: acidic residues. Basic residues predominate over residues N395–G404.

The protein belongs to the WD repeat WDR55 family.

It is found in the nucleus. The protein resides in the nucleolus. The polypeptide is WD repeat-containing protein jip5 (jip5) (Aspergillus niger (strain ATCC MYA-4892 / CBS 513.88 / FGSC A1513)).